The sequence spans 276 residues: Diaminopimelate epimerase (276 aa).

Asparagine 11, glutamine 44, and asparagine 64 together coordinate substrate. Cysteine 73 functions as the Proton donor in the catalytic mechanism. Substrate-binding positions include 74 to 75 (IN), asparagine 159, asparagine 192, and 210 to 211 (ER). Cysteine 219 (proton acceptor) is an active-site residue. 220 to 221 (GS) is a substrate binding site.

Belongs to the diaminopimelate epimerase family. As to quaternary structure, homodimer.

It localises to the cytoplasm. It carries out the reaction (2S,6S)-2,6-diaminopimelate = meso-2,6-diaminopimelate. It functions in the pathway amino-acid biosynthesis; L-lysine biosynthesis via DAP pathway; DL-2,6-diaminopimelate from LL-2,6-diaminopimelate: step 1/1. In terms of biological role, catalyzes the stereoinversion of LL-2,6-diaminopimelate (L,L-DAP) to meso-diaminopimelate (meso-DAP), a precursor of L-lysine and an essential component of the bacterial peptidoglycan. This chain is Diaminopimelate epimerase, found in Wigglesworthia glossinidia brevipalpis.